Consider the following 310-residue polypeptide: Homoserine kinase (310 aa).

91-101 (PIGSGLGSSAC) contributes to the ATP binding site.

Belongs to the GHMP kinase family. Homoserine kinase subfamily.

The protein localises to the cytoplasm. It carries out the reaction L-homoserine + ATP = O-phospho-L-homoserine + ADP + H(+). It participates in amino-acid biosynthesis; L-threonine biosynthesis; L-threonine from L-aspartate: step 4/5. Catalyzes the ATP-dependent phosphorylation of L-homoserine to L-homoserine phosphate. In Sodalis glossinidius (strain morsitans), this protein is Homoserine kinase.